The sequence spans 465 residues: UDP-N-acetylmuramoylalanine--D-glutamate ligase (465 aa).

Residue 127 to 133 (GSNGKST) coordinates ATP.

The protein belongs to the MurCDEF family.

It localises to the cytoplasm. The catalysed reaction is UDP-N-acetyl-alpha-D-muramoyl-L-alanine + D-glutamate + ATP = UDP-N-acetyl-alpha-D-muramoyl-L-alanyl-D-glutamate + ADP + phosphate + H(+). It functions in the pathway cell wall biogenesis; peptidoglycan biosynthesis. Functionally, cell wall formation. Catalyzes the addition of glutamate to the nucleotide precursor UDP-N-acetylmuramoyl-L-alanine (UMA). The chain is UDP-N-acetylmuramoylalanine--D-glutamate ligase from Cereibacter sphaeroides (strain ATCC 17023 / DSM 158 / JCM 6121 / CCUG 31486 / LMG 2827 / NBRC 12203 / NCIMB 8253 / ATH 2.4.1.) (Rhodobacter sphaeroides).